A 427-amino-acid chain; its full sequence is Adenylosuccinate synthetase (427 aa).

GTP is bound by residues Gly12 to Lys18 and Gly40 to Thr42. Asp13 (proton acceptor) is an active-site residue. Residues Asp13 and Gly40 each coordinate Mg(2+). IMP-binding positions include Asp13–Lys16, Asn38–His41, Thr127, Arg141, Gln222, Thr237, and Arg301. His41 acts as the Proton donor in catalysis. Residue Val297–Arg303 coordinates substrate. Residues Arg303, Ser329–Asp331, and Ala411–Gly413 each bind GTP.

Belongs to the adenylosuccinate synthetase family. In terms of assembly, homodimer. Requires Mg(2+) as cofactor.

The protein resides in the cytoplasm. It catalyses the reaction IMP + L-aspartate + GTP = N(6)-(1,2-dicarboxyethyl)-AMP + GDP + phosphate + 2 H(+). It functions in the pathway purine metabolism; AMP biosynthesis via de novo pathway; AMP from IMP: step 1/2. Plays an important role in the de novo pathway of purine nucleotide biosynthesis. Catalyzes the first committed step in the biosynthesis of AMP from IMP. The chain is Adenylosuccinate synthetase from Leuconostoc mesenteroides subsp. mesenteroides (strain ATCC 8293 / DSM 20343 / BCRC 11652 / CCM 1803 / JCM 6124 / NCDO 523 / NBRC 100496 / NCIMB 8023 / NCTC 12954 / NRRL B-1118 / 37Y).